The sequence spans 106 residues: Biogenesis of lysosome-related organelles complex 1 subunit 6 (106 aa).

A disordered region spans residues 78–106 (KKTSQLELSDTNIEDGSTTSTPTTTNKSQ). Polar residues predominate over residues 82-93 (QLELSDTNIEDG). Positions 94–106 (STTSTPTTTNKSQ) are enriched in low complexity.

Belongs to the BLOC1S6 family. Homodimer (isoform 1). Component of the biogenesis of lysosome-related organelles complex-1 (BLOC-1) composed at least of blos-1, blos-2, blos-4, dsbn-1, glo-2, mutd-1 and snpn-1. Isoform 1 interacts with blos-1 and blos-4.

The protein localises to the cytoplasm. Its subcellular location is the endosome. Functionally, component of the biogenesis of lysosome-related organelles complex-1 (BLOC-1) involved in gut granule biogenesis. This chain is Biogenesis of lysosome-related organelles complex 1 subunit 6 (glo-2), found in Caenorhabditis elegans.